A 314-amino-acid polypeptide reads, in one-letter code: Testis-specific Y-encoded protein 4 (314 aa).

Belongs to the nucleosome assembly protein (NAP) family.

The protein localises to the cytoplasm. The protein resides in the nucleus. May be involved in sperm differentiation and proliferation. This Homo sapiens (Human) protein is Testis-specific Y-encoded protein 4 (TSPY4).